A 465-amino-acid chain; its full sequence is Monogalactosyldiacylglycerol synthase 3, chloroplastic (465 aa).

UDP contacts are provided by residues His86, Arg255, 365 to 369 (GTIAE), and Glu387.

It belongs to the glycosyltransferase 28 family. In terms of tissue distribution, expressed mainly in roots. Detected in flowers, leaves, stems, siliques and pollen tubes.

It localises to the plastid. The protein localises to the chloroplast outer membrane. The catalysed reaction is a 1,2-diacyl-sn-glycerol + UDP-alpha-D-galactose = a 1,2-diacyl-3-O-(beta-D-galactosyl)-sn-glycerol + UDP + H(+). The enzyme catalyses 1,2-di-(9Z,12Z-octadecadienoyl)-sn-glycerol + UDP-alpha-D-galactose = 1,2-di-(9Z,12Z-octadecadienoyl)-3-beta-D-galactosyl-sn-glycerol + UDP + H(+). It catalyses the reaction 1-(9Z-octadecenoyl)-2-hexadecanoyl-sn-glycerol + UDP-alpha-D-galactose = 1-(9Z-octadecenoyl)-2-hexadecanoyl-3-beta-D-galactosyl-sn-glycerol + UDP + H(+). It carries out the reaction 1,2-di-(9Z-octadecenoyl)-sn-glycerol + UDP-alpha-D-galactose = 1,2-di-(9Z-octadecenoyl)-3-beta-D-galactosyl-sn-glycerol + UDP + H(+). Its activity is regulated as follows. Inhibited by galvestine-1. In terms of biological role, involved in the synthesis of monogalactosyldiacylglycerol, the major structural component of photosynthetic membranes and in the chloroplast envelope biogenesis. Can use both prokaryotic (18:1/16:0) or eukaryotic (18:2/18:2) 1,2-diacylglycerol species, but operates with some preference for the eukaryotic one. Plays a minor role in galactolipid synthesis in chloroplasts. Is essential for membrane lipid remodeling in phosphate-starved roots. Acts as the major factor involved in digalactosyldiacylglycerol (DGDG) biosynthesis in phosphate-starved roots. Does not seem to be required for plant growth under nutrient-sufficient conditions. Required for membrane lipid remodeling in plants grown in acidic conditions. The polypeptide is Monogalactosyldiacylglycerol synthase 3, chloroplastic (Arabidopsis thaliana (Mouse-ear cress)).